The primary structure comprises 304 residues: Ribonuclease Z (304 aa).

Zn(2+) contacts are provided by H63, H65, D67, H68, H143, D213, and H271. The active-site Proton acceptor is D67.

The protein belongs to the RNase Z family. In terms of assembly, homodimer. The cofactor is Zn(2+).

It carries out the reaction Endonucleolytic cleavage of RNA, removing extra 3' nucleotides from tRNA precursor, generating 3' termini of tRNAs. A 3'-hydroxy group is left at the tRNA terminus and a 5'-phosphoryl group is left at the trailer molecule.. Zinc phosphodiesterase, which displays some tRNA 3'-processing endonuclease activity. Probably involved in tRNA maturation, by removing a 3'-trailer from precursor tRNA. This is Ribonuclease Z from Parabacteroides distasonis (strain ATCC 8503 / DSM 20701 / CIP 104284 / JCM 5825 / NCTC 11152).